The sequence spans 429 residues: uncharacterized protein (429 aa).

11 consecutive transmembrane segments (helical) span residues 27 to 47 (PFFF…QSIG), 48 to 68 (GIMT…VSIL), 78 to 98 (ILLC…YWVF), 106 to 126 (IFIL…FLAL), 142 to 162 (ALII…PAII), 198 to 218 (LLLA…TIVI), 219 to 239 (AILT…CFYF), 249 to 269 (VLLS…YFLD), 288 to 308 (FIVG…FGYL), 351 to 371 (LILD…IYFI), and 399 to 419 (FFIS…LIIL).

The protein localises to the cell membrane. Functionally, may function as a transporter. This is an uncharacterized protein from Klebsiella pneumoniae.